We begin with the raw amino-acid sequence, 294 residues long: NAD kinase (294 aa).

Asp-74 functions as the Proton acceptor in the catalytic mechanism. Residues 74–75 (DG), 148–149 (NE), His-159, Arg-176, Asp-178, 189–194 (TAYSLS), and Gln-249 contribute to the NAD(+) site.

Belongs to the NAD kinase family. Requires a divalent metal cation as cofactor.

Its subcellular location is the cytoplasm. It catalyses the reaction NAD(+) + ATP = ADP + NADP(+) + H(+). Its function is as follows. Involved in the regulation of the intracellular balance of NAD and NADP, and is a key enzyme in the biosynthesis of NADP. Catalyzes specifically the phosphorylation on 2'-hydroxyl of the adenosine moiety of NAD to yield NADP. The sequence is that of NAD kinase from Vibrio atlanticus (strain LGP32) (Vibrio splendidus (strain Mel32)).